We begin with the raw amino-acid sequence, 236 residues long: Adenosine 5'-phosphosulfate reductase (236 aa).

[4Fe-4S] cluster-binding residues include Cys-122, Cys-123, Cys-205, and Cys-208. Catalysis depends on Cys-231, which acts as the Nucleophile; cysteine thiosulfonate intermediate.

The protein belongs to the PAPS reductase family. CysH subfamily. Requires [4Fe-4S] cluster as cofactor.

Its subcellular location is the cytoplasm. The catalysed reaction is [thioredoxin]-disulfide + sulfite + AMP + 2 H(+) = adenosine 5'-phosphosulfate + [thioredoxin]-dithiol. It functions in the pathway sulfur metabolism; hydrogen sulfide biosynthesis; sulfite from sulfate. In terms of biological role, catalyzes the formation of sulfite from adenosine 5'-phosphosulfate (APS) using thioredoxin as an electron donor. In Mycolicibacterium smegmatis (strain ATCC 700084 / mc(2)155) (Mycobacterium smegmatis), this protein is Adenosine 5'-phosphosulfate reductase.